Reading from the N-terminus, the 240-residue chain is UDP-2,3-diacylglucosamine hydrolase (240 aa).

Residues D7, H9, D40, N78, and H113 each contribute to the Mn(2+) site. 78 to 79 contacts substrate; the sequence is NR. The substrate site is built by D121, S159, K166, and H194. Residues H194 and H196 each contribute to the Mn(2+) site.

Belongs to the LpxH family. The cofactor is Mn(2+).

Its subcellular location is the cell inner membrane. It carries out the reaction UDP-2-N,3-O-bis[(3R)-3-hydroxytetradecanoyl]-alpha-D-glucosamine + H2O = 2-N,3-O-bis[(3R)-3-hydroxytetradecanoyl]-alpha-D-glucosaminyl 1-phosphate + UMP + 2 H(+). It participates in glycolipid biosynthesis; lipid IV(A) biosynthesis; lipid IV(A) from (3R)-3-hydroxytetradecanoyl-[acyl-carrier-protein] and UDP-N-acetyl-alpha-D-glucosamine: step 4/6. Hydrolyzes the pyrophosphate bond of UDP-2,3-diacylglucosamine to yield 2,3-diacylglucosamine 1-phosphate (lipid X) and UMP by catalyzing the attack of water at the alpha-P atom. Involved in the biosynthesis of lipid A, a phosphorylated glycolipid that anchors the lipopolysaccharide to the outer membrane of the cell. This is UDP-2,3-diacylglucosamine hydrolase from Pseudomonas putida (strain ATCC 47054 / DSM 6125 / CFBP 8728 / NCIMB 11950 / KT2440).